Consider the following 206-residue polypeptide: Small ribosomal subunit protein uS4 (206 aa).

The region spanning 96 to 156 (GRLDNVVYRM…EKSKKQARIK (61 aa)) is the S4 RNA-binding domain.

Belongs to the universal ribosomal protein uS4 family. Part of the 30S ribosomal subunit. Contacts protein S5. The interaction surface between S4 and S5 is involved in control of translational fidelity.

One of the primary rRNA binding proteins, it binds directly to 16S rRNA where it nucleates assembly of the body of the 30S subunit. Functionally, with S5 and S12 plays an important role in translational accuracy. In Glaesserella parasuis serovar 5 (strain SH0165) (Haemophilus parasuis), this protein is Small ribosomal subunit protein uS4.